An 802-amino-acid polypeptide reads, in one-letter code: MEEEGGSSGGAAGTSADGGDGGEQLLTVKHELRTANLTGHAEKVGIENFELLKVLGTGAYGKVFLVRKISGHDTGKLYAMKVLKKATIVQKAKTTEHTRTERQVLEHIRQSPFLVTLHYAFQTETKLHLILDYINGGELFTHLSQRERFTEHEVQIYVGEIVLALEHLHKLGIIYRDIKLENILLDSNGHVVLTDFGLSKEFVADETERAYSFCGTIEYMAPDIVRGGDSGHDKAVDWWSLGVLMYELLTGASPFTVDGEKNSQAEISRRILKSEPPYPQEMSALAKDLIQRLLMKDPKKRLGCGPRDADEIKEHLFFQKINWDDLAAKKVPAPFKPVIRDELDVSNFAEEFTEMDPTYSPAALPQSSEKLFQGYSFVAPSILFKRNAAVIDPLQFHMGVERPGVTNVARSAMMKDSPFYQHYDLDLKDKPLGEGSFSICRKCVHKKSNQAFAVKIISKRMEANTQKEITALKLCEGHPNIVKLHEVFHDQLHTFLVMELLNGGELFERIKKKKHFSETEASYIMRKLVSAVSHMHDVGVVHRDLKPENLLFTDENDNLEIKIIDFGFARLKPPDNQPLKTPCFTLHYAAPELLNQNGYDESCDLWSLGVILYTMLSGQVPFQSHDRSLTCTSAVEIMKKIKKGDFSFEGEAWKNVSQEAKDLIQGLLTVDPNKRLKMSGLRYNEWLQDGSQLSSNPLMTPDILGSSGAAVHTCVKATFHAFNKYKREGFCLQNVDKAPLAKRRKMKKTSTSTETRSSSSESSHSSSSHSHGKTTPTKTLQPSNPADSNNPETLFQFSDSVA.

A compositionally biased stretch (gly residues) spans 1 to 22 (MEEEGGSSGGAAGTSADGGDGG). A disordered region spans residues 1–23 (MEEEGGSSGGAAGTSADGGDGGE). Residues 49-318 (FELLKVLGTG…ADEIKEHLFF (270 aa)) form the Protein kinase 1 domain. ATP-binding positions include 55-63 (LGTGAYGKV) and Lys-81. Asp-177 acts as the Proton acceptor in catalysis. Position 212 is a phosphoserine; by autocatalysis (Ser-212). An AGC-kinase C-terminal domain is found at 319–387 (QKINWDDLAA…VAPSILFKRN (69 aa)). The residue at position 360 (Ser-360) is a Phosphoserine; by MAPK1, MAPK3 and MAPK14. Phosphoserine; by autocatalysis is present on residues Ser-376 and Ser-381. Residues 426–687 (DLKDKPLGEG…MSGLRYNEWL (262 aa)) enclose the Protein kinase 2 domain. ATP is bound by residues 432 to 440 (LGEGSFSIC) and Lys-455. The Proton acceptor role is filled by Asp-544. Position 581 is a phosphothreonine; by MAPK1, MAPK3 and MAPK14 (Thr-581). Phosphoserine occurs at positions 647, 657, 691, and 695. Thr-700 carries the phosphothreonine; by MAPK1, MAPK3 and MAPK14 modification. The segment at 741 to 802 (AKRRKMKKTS…TLFQFSDSVA (62 aa)) is disordered. A compositionally biased stretch (low complexity) spans 749–779 (TSTSTETRSSSSESSHSSSSHSHGKTTPTKT). Phosphoserine; by autocatalysis is present on residues Ser-750, Ser-752, and Ser-758. Polar residues predominate over residues 780–802 (LQPSNPADSNNPETLFQFSDSVA). The residue at position 798 (Ser-798) is a Phosphoserine.

It belongs to the protein kinase superfamily. AGC Ser/Thr protein kinase family. S6 kinase subfamily. Forms a complex with either MAPK1/ERK2 or MAPK3/ERK1 in quiescent cells which transiently dissociates following mitogenic stimulation. Also associates with MAPK14/p38-alpha. Activated RPS6KA5 associates with and phosphorylates the NF-kappa-B p65 subunit RELA. Interacts with CREBBP and EP300. Requires Mg(2+) as cofactor. Post-translationally, ser-376 and Thr-581 phosphorylation is required for kinase activity. Ser-376 and Ser-212 are autophosphorylated by the C-terminal kinase domain, and their phosphorylation is essential for the catalytic activity of the N-terminal kinase domain. Phosphorylated at Ser-360, Thr-581 and Thr-700 by MAPK1/ERK2, MAPK3/ERK1 and MAPK14/p38-alpha. Autophosphorylated at Ser-750, Ser-752 and Ser-758 by the N-terminal kinase domain. In terms of processing, ubiquitinated. Widely expressed with high levels in heart, brain and placenta. Less abundant in lung, kidney and liver.

It is found in the nucleus. The protein resides in the cytoplasm. It catalyses the reaction L-seryl-[protein] + ATP = O-phospho-L-seryl-[protein] + ADP + H(+). The enzyme catalyses L-threonyl-[protein] + ATP = O-phospho-L-threonyl-[protein] + ADP + H(+). With respect to regulation, activated by phosphorylation at Ser-360, Thr-581 and Thr-700 by MAPK1/ERK2, MAPK3/ERK1 and MAPK14/p38-alpha, and by further autophosphorylation of Ser-212, Ser-376 and Ser-381 by the activated C-terminal kinase domain. The active N-terminal kinase domain finally phosphorylates downstream substrates, as well as Ser-750, Ser-752 and Ser-758 in its own C-terminal region. In terms of biological role, serine/threonine-protein kinase that is required for the mitogen or stress-induced phosphorylation of the transcription factors CREB1 and ATF1 and for the regulation of the transcription factors RELA, STAT3 and ETV1/ER81, and that contributes to gene activation by histone phosphorylation and functions in the regulation of inflammatory genes. Phosphorylates CREB1 and ATF1 in response to mitogenic or stress stimuli such as UV-C irradiation, epidermal growth factor (EGF) and anisomycin. Plays an essential role in the control of RELA transcriptional activity in response to TNF and upon glucocorticoid, associates in the cytoplasm with the glucocorticoid receptor NR3C1 and contributes to RELA inhibition and repression of inflammatory gene expression. In skeletal myoblasts is required for phosphorylation of RELA at 'Ser-276' during oxidative stress. In erythropoietin-stimulated cells, is necessary for the 'Ser-727' phosphorylation of STAT3 and regulation of its transcriptional potential. Phosphorylates ETV1/ER81 at 'Ser-191' and 'Ser-216', and thereby regulates its ability to stimulate transcription, which may be important during development and breast tumor formation. Directly represses transcription via phosphorylation of 'Ser-1' of histone H2A. Phosphorylates 'Ser-10' of histone H3 in response to mitogenics, stress stimuli and EGF, which results in the transcriptional activation of several immediate early genes, including proto-oncogenes c-fos/FOS and c-jun/JUN. May also phosphorylate 'Ser-28' of histone H3. Mediates the mitogen- and stress-induced phosphorylation of high mobility group protein 1 (HMGN1/HMG14). In lipopolysaccharide-stimulated primary macrophages, acts downstream of the Toll-like receptor TLR4 to limit the production of pro-inflammatory cytokines. Functions probably by inducing transcription of the MAP kinase phosphatase DUSP1 and the anti-inflammatory cytokine interleukin 10 (IL10), via CREB1 and ATF1 transcription factors. Plays a role in neuronal cell death by mediating the downstream effects of excitotoxic injury. Phosphorylates TRIM7 at 'Ser-107' in response to growth factor signaling via the MEK/ERK pathway, thereby stimulating its ubiquitin ligase activity. This is Ribosomal protein S6 kinase alpha-5 (RPS6KA5) from Homo sapiens (Human).